The sequence spans 482 residues: Bile acid receptor (482 aa).

Residue Lys132 forms a Glycyl lysine isopeptide (Lys-Gly) (interchain with G-Cter in SUMO1) linkage. A DNA-binding region (nuclear receptor) is located at residues 134–209 (DELCVVCGDR…MGMLAECLLT (76 aa)). The NR C4-type zinc-finger motif lies at 137-157 (CVVCGDRASGYHYNALTCEGC). A phosphoserine; by PKC/PRKCA mark is found at Ser145 and Ser164. At Lys167 the chain carries N6-acetyllysine; by EP300. The NR C4-type zinc-finger motif lies at 173–197 (CKNGGNCVMDMYMRRKCQECRLRKC). Residue Lys216 is modified to N6-methyllysine; by SETD7. N6-acetyllysine; by EP300 is present on Lys223. Positions 229–240 (AIHEDSEGRDLR) are enriched in basic and acidic residues. The interval 229–253 (AIHEDSEGRDLRQVTSTTKSCREKT) is disordered. The region spanning 258–482 (DQQNLLHYIM…PLLCEIWDVQ (225 aa)) is the NR LBD domain. A Glycyl lysine isopeptide (Lys-Gly) (interchain with G-Cter in SUMO1) cross-link involves residue Lys285. Chenodeoxycholate contacts are provided by Arg341, Tyr371, and Tyr379. Thr452 carries the phosphothreonine; by PKC/PRKCZ modification. His457 contributes to the chenodeoxycholate binding site.

Belongs to the nuclear hormone receptor family. NR1 subfamily. As to quaternary structure, heterodimer with RXRA; the heterodimerization enhances the binding affinity for LXXLL motifs from coactivators. Binds DNA predominantly as a heterodimer with RXRA. After activation by agonist binding interacts with coactivators. Interacts with NCOA1, NCOA2, PPARGC1A, CARM1, SETD7, PRMT1, GPS2, SMARCA4 and MED1, EP300 and SMARCD1. Interacts with XRCC5 and XRCC6; decreasing NR1H4/FXR transactivation activity towards ABCB11/BSEP. Interacts with PAGR1 AND NCOA6; indicative for an association with an MLL2/MLL3 complex (ASCOM). Acetylated by EP300. Lys-223 as is the major acetylation site for EP300; the dynamicly regulated acetylation inhibits heterodimerization with RXRA and transactivation activity. Deacetylated by SIRT1. Post-translationally, methylation may increase transactivation of target genes. In terms of processing, phosphorylation by PKC/PRKCA increases transactivation activity by promoting association with PPARGC1A. Sumoylated upon ligand binding.

The protein localises to the nucleus. In terms of biological role, ligand-activated transcription factor. Receptor for bile acids (BAs) such as chenodeoxycholic acid (CDCA), lithocholic acid, deoxycholic acid (DCA) and allocholic acid (ACA). Plays a essential role in BA homeostasis through the regulation of genes involved in BA synthesis, conjugation and enterohepatic circulation. Also regulates lipid and glucose homeostasis and is involved innate immune response. The FXR-RXR heterodimer binds predominantly to farnesoid X receptor response elements (FXREs) containing two inverted repeats of the consensus sequence 5'-AGGTCA-3' in which the monomers are spaced by 1 nucleotide (IR-1) but also to tandem repeat DR1 sites with lower affinity, and can be activated by either FXR or RXR-specific ligands. It is proposed that monomeric nuclear receptors such as NR5A2/LRH-1 bound to coregulatory nuclear responsive element (NRE) halfsites located in close proximity to FXREs modulate transcriptional activity. In the liver activates transcription of the corepressor NR0B2 thereby indirectly inhibiting CYP7A1 and CYP8B1 (involved in BA synthesis) implicating at least in part histone demethylase KDM1A resulting in epigenomic repression, and SLC10A1/NTCP (involved in hepatic uptake of conjugated BAs). Activates transcription of the repressor MAFG (involved in regulation of BA synthesis). Activates transcription of SLC27A5/BACS and BAAT (involved in BA conjugation), ABCB11/BSEP (involved in bile salt export) by directly recruiting histone methyltransferase CARM1, and ABCC2/MRP2 (involved in secretion of conjugated BAs) and ABCB4 (involved in secretion of phosphatidylcholine in the small intestine). Activates transcription of SLC27A5/BACS and BAAT (involved in BA conjugation), ABCB11/BSEP (involved in bile salt export) by directly recruiting histone methyltransferase CARM1, and ABCC2/MRP2 (involved in secretion of conjugated BAs) and ABCB4 (involved in secretion of phosphatidylcholine in the small intestine). In the intestine activates FGF19 expression and secretion leading to hepatic CYP7A1 repression. The function also involves the coordinated induction of hepatic KLB/beta-klotho expression. Regulates transcription of liver UGT2B4 and SULT2A1 involved in BA detoxification; binding to the UGT2B4 promoter seems to imply a monomeric transactivation independent of RXRA. Modulates lipid homeostasis by activating liver NR0B2/SHP-mediated repression of SREBF1 (involved in de novo lipogenesis), expression of PLTP (involved in HDL formation), SCARB1 (involved in HDL hepatic uptake), APOE, APOC1, APOC4, PPARA (involved in beta-oxidation of fatty acids), VLDLR and SDC1 (involved in the hepatic uptake of LDL and IDL remnants), and inhibiting expression of MTTP (involved in VLDL assembly). Increases expression of APOC2 (promoting lipoprotein lipase activity implicated in triglyceride clearance). Transrepresses APOA1 involving a monomeric competition with NR2A1 for binding to a DR1 element. Also reduces triglyceride clearance by inhibiting expression of ANGPTL3 and APOC3 (both involved in inhibition of lipoprotein lipase). Involved in glucose homeostasis by modulating hepatic gluconeogenesis through activation of NR0B2/SHP-mediated repression of respective genes. Modulates glycogen synthesis (inducing phosphorylation of glycogen synthase kinase-3). Modulates glucose-stimulated insulin secretion and is involved in insulin resistance. Involved in intestinal innate immunity. Plays a role in protecting the distal small intestine against bacterial overgrowth and preservation of the epithelial barrier. Down-regulates inflammatory cytokine expression in several types of immune cells including macrophages and mononuclear cells. Mediates trans-repression of TLR4-induced cytokine expression; the function seems to require its sumoylation and prevents N-CoR nuclear receptor corepressor clearance from target genes such as IL1B and NOS2. Involved in the TLR9-mediated protective mechanism in intestinal inflammation. Plays an anti-inflammatory role in liver inflammation; proposed to inhibit pro-inflammatory (but not antiapoptotic) NF-kappa-B signaling. This is Bile acid receptor (NR1H4) from Bos taurus (Bovine).